We begin with the raw amino-acid sequence, 352 residues long: Small ribosomal subunit biogenesis GTPase RsgA 2 (352 aa).

The 158-residue stretch at 100-257 folds into the CP-type G domain; the sequence is RQDGQIIATN…VIDTPGMREL (158 aa). GTP-binding positions include 147 to 150 and 199 to 207; these read TKAD and GSSGVGKST. Residues Cys-278, Cys-283, His-285, and Cys-291 each coordinate Zn(2+).

It belongs to the TRAFAC class YlqF/YawG GTPase family. RsgA subfamily. Monomer. Associates with 30S ribosomal subunit, binds 16S rRNA. The cofactor is Zn(2+).

The protein localises to the cytoplasm. One of several proteins that assist in the late maturation steps of the functional core of the 30S ribosomal subunit. Helps release RbfA from mature subunits. May play a role in the assembly of ribosomal proteins into the subunit. Circularly permuted GTPase that catalyzes slow GTP hydrolysis, GTPase activity is stimulated by the 30S ribosomal subunit. This is Small ribosomal subunit biogenesis GTPase RsgA 2 from Lactiplantibacillus plantarum (strain ATCC BAA-793 / NCIMB 8826 / WCFS1) (Lactobacillus plantarum).